We begin with the raw amino-acid sequence, 198 residues long: Recombination protein RecR (198 aa).

A C4-type zinc finger spans residues 57-72 (CSVCGNLTDEDPCAIC). A Toprim domain is found at 80 to 175 (STILIVEDSR…KVTRLARGLA (96 aa)).

It belongs to the RecR family.

In terms of biological role, may play a role in DNA repair. It seems to be involved in an RecBC-independent recombinational process of DNA repair. It may act with RecF and RecO. This is Recombination protein RecR from Streptococcus sanguinis (strain SK36).